We begin with the raw amino-acid sequence, 298 residues long: Protein RKD2 (298 aa).

Composition is skewed to basic and acidic residues over residues 1-10 (MADHTTKEQK) and 81-102 (EQNR…VKET). 2 disordered regions span residues 1–22 (MADH…PSFD) and 73–112 (SSAS…NERH). One can recognise an RWP-RK domain in the interval 121–203 (SDITTYTTSS…KMEGEENAEK (83 aa)). The stretch at 188–222 (NVKELQKMEGEENAEKLQDALEMLEKEKRTIEDLP) forms a coiled coil. The tract at residues 241–279 (NHKRKKKRSLKSDQSQVPSCSSSGSVPSDESVDEAGMES) is disordered. Low complexity predominate over residues 252-269 (SDQSQVPSCSSSGSVPSD). Over residues 270 to 279 (ESVDEAGMES) the composition is skewed to acidic residues.

It is found in the nucleus. In terms of biological role, putative transcription factor. The polypeptide is Protein RKD2 (RKD2) (Arabidopsis thaliana (Mouse-ear cress)).